The primary structure comprises 203 residues: Glycerol-3-phosphate acyltransferase (203 aa).

6 consecutive transmembrane segments (helical) span residues 1-21 (MPAW…GSIP), 52-72 (VGKG…AAAV), 73-93 (ALGS…GAVI), 115-135 (ILLA…LLGI), 140-160 (IVSF…WALG), and 161-181 (QPLP…AAHR).

Belongs to the PlsY family. Probably interacts with PlsX.

It is found in the cell inner membrane. It catalyses the reaction an acyl phosphate + sn-glycerol 3-phosphate = a 1-acyl-sn-glycero-3-phosphate + phosphate. It functions in the pathway lipid metabolism; phospholipid metabolism. Its function is as follows. Catalyzes the transfer of an acyl group from acyl-phosphate (acyl-PO(4)) to glycerol-3-phosphate (G3P) to form lysophosphatidic acid (LPA). This enzyme utilizes acyl-phosphate as fatty acyl donor, but not acyl-CoA or acyl-ACP. The chain is Glycerol-3-phosphate acyltransferase from Synechococcus sp. (strain JA-3-3Ab) (Cyanobacteria bacterium Yellowstone A-Prime).